Consider the following 477-residue polypeptide: MIHQHPESFPKHFLWGSASAAYQIEGAWNEDGKGPSVWDVFTKIPGKTFKGTNGEIAVDHYHRFKEDVALMAEMGLKAYRFSVSWPRVFPKGKGEINEAGLAFYDSLIDELLSHHIEPVLTLYHWDLPQALMDEYGGFESRNIIEDFNHYCITLYKRFGDRVKYWVTLNEQNYNFNHGFITAMHPPGVKDRKRFYEANHIAFLANAKAIESFREYVPEGKIGPSFAYSPAYPLSSHPEDILAFENAEEFTNNWWLDMYCWGTYPQIPFRCLEKQGWAPTIEAGDMDLLAKGKPDFVGVNYYQTITYERNPLDGVSEGKMNTTGQKGTNQETGIPGVFKTKKNPHLTTSNWDWTIDPIGLRIGLRRITSRYQLPVFITENGLGEFDKVEDGTVQDDYRIDYLRSHLEQCRQAISDGVDLIGYCSWSFTDLLSWLNGYQKRYGFVYVNRDEESTSDLKRLKKKSFYWYQDVIKTNGESL.

Catalysis depends on Glu-170, which acts as the Proton donor. Glu-378 functions as the Nucleophile in the catalytic mechanism.

Belongs to the glycosyl hydrolase 1 family.

The catalysed reaction is 6-phospho-beta-D-glucosyl-(1-&gt;4)-D-glucose + H2O = D-glucose 6-phosphate + D-glucose. Functionally, is able to catalyze the hydrolysis of aryl-phospho-beta-D-glucosides such as 4-methylumbelliferyl-phospho-beta-D-glucopyranoside (MUG-P), phosphoarbutin and phosphosalicin. Is not essential for growth on arbutin and salicin as the sole carbon source. This is Aryl-phospho-beta-D-glucosidase BglC (bglC) from Bacillus subtilis (strain 168).